The sequence spans 325 residues: Tetraacyldisaccharide 4'-kinase (325 aa).

53 to 60 (SVGGNGKT) contributes to the ATP binding site.

It belongs to the LpxK family.

The catalysed reaction is a lipid A disaccharide + ATP = a lipid IVA + ADP + H(+). The protein operates within glycolipid biosynthesis; lipid IV(A) biosynthesis; lipid IV(A) from (3R)-3-hydroxytetradecanoyl-[acyl-carrier-protein] and UDP-N-acetyl-alpha-D-glucosamine: step 6/6. Functionally, transfers the gamma-phosphate of ATP to the 4'-position of a tetraacyldisaccharide 1-phosphate intermediate (termed DS-1-P) to form tetraacyldisaccharide 1,4'-bis-phosphate (lipid IVA). This chain is Tetraacyldisaccharide 4'-kinase, found in Mannheimia succiniciproducens (strain KCTC 0769BP / MBEL55E).